The primary structure comprises 98 residues: UPF0235 protein CCNA_03737 (98 aa).

Belongs to the UPF0235 family.

This chain is UPF0235 protein CCNA_03737, found in Caulobacter vibrioides (strain NA1000 / CB15N) (Caulobacter crescentus).